A 211-amino-acid polypeptide reads, in one-letter code: DNA dC-&gt;dU-editing enzyme APOBEC-3H (211 aa).

The region spanning 4 to 126 is the CMP/dCMP-type deaminase domain; the sequence is LTAKTFSLQF…RRQQEGLRLL (123 aa). Histidine 54 contacts Zn(2+). Glutamate 56 functions as the Proton donor in the catalytic mechanism. Zn(2+)-binding residues include cysteine 85 and cysteine 88.

Belongs to the cytidine and deoxycytidylate deaminase family. In terms of assembly, homodimer. The cofactor is Zn(2+).

Its subcellular location is the cytoplasm. It catalyses the reaction a 2'-deoxycytidine in single-stranded DNA + H2O + H(+) = a 2'-deoxyuridine in single-stranded DNA + NH4(+). DNA deaminase (cytidine deaminase) which may act as an inhibitor of retrovirus replication and retrotransposon mobility via deaminase-dependent and -independent mechanisms. The sequence is that of DNA dC-&gt;dU-editing enzyme APOBEC-3H from Pongo pygmaeus (Bornean orangutan).